The chain runs to 648 residues: Phosphatidylinositol-3,5-bisphosphate 3-phosphatase MTMR14 (648 aa).

Residues 1 to 19 (MAGARAAAAASAGSTASSG) show a composition bias toward low complexity. The interval 1 to 27 (MAGARAAAAASAGSTASSGSPPPQEPG) is disordered. Lys-193 is subject to N6-acetyllysine. N-linked (GlcNAc...) asparagine glycans are attached at residues Asn-225 and Asn-240. The active-site Phosphocysteine intermediate is the Cys-329. The a 1,2-diacyl-sn-glycero-3-phospho-(1D-myo-inositol-3,5-bisphosphate) site is built by Gly-332, Trp-333, Asp-334, Arg-335, and Arg-381. Residues Gly-332, Trp-333, Asp-334, Arg-335, and Arg-381 each coordinate a 1,2-diacyl-sn-glycero-3-phospho-(1D-myo-inositol-3-phosphate). The segment at 471–544 (PTQAAWRKSH…PRSVDHPLPG (74 aa)) is disordered. A compositionally biased stretch (basic and acidic residues) spans 494-506 (PSEERLPSHHGLT). At Ser-516 the chain carries Phosphoserine. The N-linked (GlcNAc...) asparagine glycan is linked to Asn-517. 3 positions are modified to phosphoserine: Ser-528, Ser-578, and Ser-622. Omega-N-methylarginine is present on Arg-636.

Belongs to the protein-tyrosine phosphatase family. Non-receptor class myotubularin subfamily.

It is found in the cytoplasm. It catalyses the reaction a 1,2-diacyl-sn-glycero-3-phospho-(1D-myo-inositol-3,5-bisphosphate) + H2O = a 1,2-diacyl-sn-glycero-3-phospho-(1D-myo-inositol-5-phosphate) + phosphate. The enzyme catalyses a 1,2-diacyl-sn-glycero-3-phospho-(1D-myo-inositol-3-phosphate) + H2O = a 1,2-diacyl-sn-glycero-3-phospho-(1D-myo-inositol) + phosphate. In terms of biological role, lipid phosphatase that specifically dephosphorylates the D-3 position of phosphatidylinositol 3-phosphate and phosphatidylinositol 3,5-bisphosphate, generating phosphatidylinositol and phosphatidylinositol 5-phosphate. The polypeptide is Phosphatidylinositol-3,5-bisphosphate 3-phosphatase MTMR14 (Mus musculus (Mouse)).